Consider the following 426-residue polypeptide: Serine hydroxymethyltransferase (426 aa).

Residues L118 and 122–124 (GHL) contribute to the (6S)-5,6,7,8-tetrahydrofolate site. Residue K227 is modified to N6-(pyridoxal phosphate)lysine.

It belongs to the SHMT family. As to quaternary structure, homodimer. The cofactor is pyridoxal 5'-phosphate.

The protein localises to the cytoplasm. The catalysed reaction is (6R)-5,10-methylene-5,6,7,8-tetrahydrofolate + glycine + H2O = (6S)-5,6,7,8-tetrahydrofolate + L-serine. It functions in the pathway one-carbon metabolism; tetrahydrofolate interconversion. Its pathway is amino-acid biosynthesis; glycine biosynthesis; glycine from L-serine: step 1/1. Catalyzes the reversible interconversion of serine and glycine with tetrahydrofolate (THF) serving as the one-carbon carrier. This reaction serves as the major source of one-carbon groups required for the biosynthesis of purines, thymidylate, methionine, and other important biomolecules. Also exhibits THF-independent aldolase activity toward beta-hydroxyamino acids, producing glycine and aldehydes, via a retro-aldol mechanism. The sequence is that of Serine hydroxymethyltransferase from Mycobacterium leprae (strain Br4923).